Reading from the N-terminus, the 367-residue chain is Zinc transport system membrane protein TroD (367 aa).

9 consecutive transmembrane segments (helical) span residues 5–25, 28–48, 56–76, 87–107, 140–160, 170–190, 201–221, 224–244, and 251–271; these read VVLI…FLVL, ISLM…LGYF, FVPF…AELL, AVGL…SLYA, SLVQ…LFFK, VLAT…MLAV, VGAV…LLLT, LLLM…SGLF, and GSIA…VYLF.

Belongs to the ABC-3 integral membrane protein family.

It is found in the cell membrane. In terms of biological role, part of an ATP-driven transport system TroABCD for zinc. The protein is Zinc transport system membrane protein TroD (troD) of Treponema pallidum (strain Nichols).